The primary structure comprises 311 residues: Nucleotide-binding protein Acel_1111 (311 aa).

30–37 is a binding site for ATP; the sequence is GLSGAGRS. GTP is bound at residue 81 to 84; the sequence is DVRS.

The protein belongs to the RapZ-like family.

In terms of biological role, displays ATPase and GTPase activities. This Acidothermus cellulolyticus (strain ATCC 43068 / DSM 8971 / 11B) protein is Nucleotide-binding protein Acel_1111.